Reading from the N-terminus, the 777-residue chain is uncharacterized protein (777 aa).

8 disordered regions span residues 1 to 101 (MNNN…NLSN), 128 to 150 (SYNN…NDDN), 219 to 267 (HHIH…NNMN), 334 to 366 (SLPF…GIDD), 391 to 466 (ISNS…ATIS), 529 to 577 (KNLN…NNKG), 590 to 622 (LAQE…ISTI), and 713 to 751 (EKQG…KWKP). Composition is skewed to low complexity over residues 128–147 (SYNN…NNIN) and 243–265 (NNNN…NHNN). The span at 334-343 (SLPFSSLSDN) shows a compositional bias: polar residues. A compositionally biased stretch (acidic residues) spans 344–366 (NGDDDDDGIDDGIDDGIDDGIDD). Over residues 391–407 (ISNSFHQNQSPCNNSFK) the composition is skewed to polar residues. 2 stretches are compositionally biased toward low complexity: residues 408–466 (NNNN…ATIS) and 532–574 (NNNN…NNKN). Over residues 597–606 (EQNKTKKELE) the composition is skewed to basic and acidic residues. Composition is skewed to acidic residues over residues 607–620 (EVKE…EEIS) and 718–730 (DDPE…DSDS). Low complexity predominate over residues 731-740 (DSNSNSDSSD).

This is an uncharacterized protein from Dictyostelium discoideum (Social amoeba).